The following is a 386-amino-acid chain: MVEMSTGMKNLTRTLESMDFLKMDRRTFMKAVSALGATAFLGTYQTEIVNALEFAETKLIWIHGSECTGCSESLLNGGNPDVAQALTKLNVNLAYHETLCMQQGIWNDGELVNTSELNSEILLEDLYKEGNYILVVEGSIPNGPDGSGRYLVIGNKTFKETLGEAAENANAIVAVGACACWGGITSADSDIEKETDYRGVAFKKTDASKGMLKELGIDKPVINIPGCPAHPDWILLTLGAVILGKIKIPDDLPAALDQYGRPKLFFPPDHTVHENCPRRGYYDRGEFDEEVGGEKCLWKLGCKAPYAHADCGIRRWNGSVSMCTQAGGPCINCVDPGFPDASRPLYVEAEDKGIVGANIDTVAKVAVGAAAVAAGVHAVRRMGKGE.

Residues 1 to 51 (MVEMSTGMKNLTRTLESMDFLKMDRRTFMKAVSALGATAFLGTYQTEIVNA) constitute a signal peptide (tat-type signal). [4Fe-4S] cluster-binding residues include C67, C70, C178, C227, H273, C276, C296, and C302. 3 residues coordinate [3Fe-4S] cluster: C311, C330, and C333.

This sequence belongs to the [NiFe]/[NiFeSe] hydrogenase small subunit family. Composed of a large subunit (VhtA), a small subunit (VhtG) and a cytochrome subunit (VhtC). It depends on [4Fe-4S] cluster as a cofactor. [3Fe-4S] cluster serves as cofactor. Predicted to be exported by the Tat system. The position of the signal peptide cleavage has not been experimentally proven.

It is found in the cell membrane. It carries out the reaction methanophenazine + H2 = dihydromethanophenazine. In terms of biological role, part of the F420 non-reducing hydrogenase II complex that catalyzes the reduction of methanophenazine to dihydromethanophenazine. The sequence is that of F420 non-reducing hydrogenase II small subunit from Methanosarcina mazei (strain ATCC BAA-159 / DSM 3647 / Goe1 / Go1 / JCM 11833 / OCM 88) (Methanosarcina frisia).